We begin with the raw amino-acid sequence, 533 residues long: Calcium uptake protein 1 homolog, mitochondrial (533 aa).

Residues 1 to 13 (MLRHNFRSSIFIR) constitute a mitochondrion transit peptide. The segment at 127 to 147 (PFRPEASQKEESTDSGTEIEV) is disordered. 3 consecutive EF-hand domains span residues 270–305 (TSHADFALAFKIFDVDGNGALDKEEFTKVQQLIMSQ), 337–358 (KDGKGSLSSEKFIEFQERLQHD), and 465–500 (LSDHVVDVVITLFDDNLDGKLSHEEMVAVMRRRMRR). Ca(2+)-binding residues include Asp283, Asp285, Asn287, and Glu294.

Belongs to the MICU1 family. MICU1 subfamily.

Its subcellular location is the mitochondrion intermembrane space. It is found in the mitochondrion inner membrane. Calcium sensor of the mitochondrial calcium uniporter (mcu-1) channel, which senses calcium level via its EF-hand domains. At low calcium levels, micu-1 occludes the pore of the mcu-1 channel, preventing mitochondrial calcium uptake. At higher calcium levels, calcium-binding to micu-1 induces a conformational change that weakens mcu-1-micu-1 interactions and moves micu-1 away from the pore, allowing calcium permeation through the mcu-1 channel. Also required to protect against manganese toxicity by preventing manganese uptake by mcu-1. Modulates the activity of the mitochondrial calcium uniporter protein mcu-1 depending on the level of intracellular calcium in PLM touch receptor neurons following axonal injury. The chain is Calcium uptake protein 1 homolog, mitochondrial from Caenorhabditis briggsae.